We begin with the raw amino-acid sequence, 593 residues long: Aspartate--tRNA(Asp/Asn) ligase (593 aa).

E173 is a binding site for L-aspartate. Residues 197 to 200 (QLFK) are aspartate. R219 is an L-aspartate binding site. ATP contacts are provided by residues 219 to 221 (RDE) and Q228. H451 is an L-aspartate binding site. Residue E485 participates in ATP binding. R492 serves as a coordination point for L-aspartate. 537–540 (GIDR) is an ATP binding site.

Belongs to the class-II aminoacyl-tRNA synthetase family. Type 1 subfamily. Homodimer.

The protein resides in the cytoplasm. The enzyme catalyses tRNA(Asx) + L-aspartate + ATP = L-aspartyl-tRNA(Asx) + AMP + diphosphate. Aspartyl-tRNA synthetase with relaxed tRNA specificity since it is able to aspartylate not only its cognate tRNA(Asp) but also tRNA(Asn). Reaction proceeds in two steps: L-aspartate is first activated by ATP to form Asp-AMP and then transferred to the acceptor end of tRNA(Asp/Asn). The sequence is that of Aspartate--tRNA(Asp/Asn) ligase from Legionella pneumophila subsp. pneumophila (strain Philadelphia 1 / ATCC 33152 / DSM 7513).